The primary structure comprises 122 residues: Serum amyloid A-1 protein (122 aa).

Residues 1-19 (MKLLTSLVFCSLLLGVCHG) form the signal peptide. Positions 20-45 (GFFSFVHEAFQGAGDMWRAYTDMKEA) are important for amyloid formation. The span at 91 to 108 (HEDTIADQEANRHGRSGK) shows a compositional bias: basic and acidic residues. Residues 91-122 (HEDTIADQEANRHGRSGKDPNYYRPPGLPDKY) are disordered.

Belongs to the SAA family. Homohexamer; dimer of trimers. Can form amyloid fibrils after partial proteolysis; the native, undenatured protein does not form amyloid fibrils (in vitro). Apolipoprotein of the HDL complex. Binds to heparin. Detected in blood plasma (at protein level). Detected in liver.

The protein localises to the secreted. Major acute phase protein. The sequence is that of Serum amyloid A-1 protein (Saa1) from Mus musculus (Mouse).